A 398-amino-acid chain; its full sequence is Mu-type opioid receptor (398 aa).

At 1 to 66 (MDSSTGPGNT…CPQTGSPSMV (66 aa)) the chain is on the extracellular side. 5 N-linked (GlcNAc...) asparagine glycosylation sites follow: N9, N31, N38, N46, and N53. Residues 67-91 (TAITIMALYSIVCVVGLFGNFLVMY) traverse the membrane as a helical segment. The Cytoplasmic segment spans residues 92–104 (VIVRYTKMKTATN). Residues 105–129 (IYIFNLALADALATSTLPFQSVNYL) traverse the membrane as a helical segment. Residues 130–140 (MGTWPFGTILC) lie on the Extracellular side of the membrane. C140 and C217 are oxidised to a cystine. A helical membrane pass occupies residues 141-163 (KIVISIDYYNMFTSIFTLCTMSV). Residues 164-183 (DRYIAVCHPVKALDFRTPRN) lie on the Cytoplasmic side of the membrane. Y166 carries the post-translational modification Phosphotyrosine. A helical transmembrane segment spans residues 184–205 (AKIVNVCNWILSSAIGLPVMFM). Over 206 to 228 (ATTKYRQGSIDCTLTFSHPTWYW) the chain is Extracellular. The chain crosses the membrane as a helical span at residues 229-253 (ENLLKICVFIFAFIMPVLIITVCYG). The Cytoplasmic segment spans residues 254–277 (LMILRLKSVRMLSGSKEKDRNLRR). A helical membrane pass occupies residues 278 to 304 (ITRMVLVVVAVFIVCWTPIHIYVIIKA). The Extracellular portion of the chain corresponds to 305–312 (LITIPETT). Residues 313–336 (FQTVSWHFCIALGYTNSCLNPVLY) form a helical membrane-spanning segment. An NPxxY; plays a role in stabilizing the activated conformation of the receptor motif is present at residues 332–336 (NPVLY). The Cytoplasmic segment spans residues 337-398 (AFLDENFKRC…NLEAETAPLP (62 aa)). A lipid anchor (S-palmitoyl cysteine) is attached at C351. Residues 361 to 385 (QNSTRVRQNTREHPSTANTVDRTNH) form a disordered region. S363 carries the phosphoserine modification. A Phosphothreonine modification is found at T370. Residue S375 is modified to Phosphoserine. At T394 the chain carries Phosphothreonine.

This sequence belongs to the G-protein coupled receptor 1 family. Forms homooligomers and heterooligomers with other GPCRs, such as OPRD1, OPRK1, OPRL1, NPFFR2, ADRA2A, SSTR2, CNR1 and CCR5 (probably in dimeric forms). Interacts with heterotrimeric G proteins; interaction with a heterotrimeric complex containing GNAI1, GNB1 and GNG2 stabilizes the active conformation of the receptor and increases its affinity for endomorphin-2, the synthetic opioid peptide DAMGO and for morphinan agonists. Interacts with PPL; the interaction disrupts agonist-mediated G-protein activation. Interacts (via C-terminus) with DNAJB4 (via C-terminus). Interacts with calmodulin; the interaction inhibits the constitutive activity of OPRM1; it abolishes basal and attenuates agonist-stimulated G-protein coupling. Interacts with FLNA, PLD2, RANBP9 and WLS and GPM6A. Interacts with RTP4. Interacts with SYP and GNAS. Interacts with RGS9, RGS17, RGS20, RGS4, PPP1R9B and HINT1. In terms of processing, phosphorylated. Differentially phosphorylated in basal and agonist-induced conditions. Agonist-mediated phosphorylation modulates receptor internalization. Phosphorylated by GRK2 in a agonist-dependent manner. Phosphorylation at Tyr-166 requires receptor activation, is dependent on non-receptor protein tyrosine kinase Src and results in a decrease in agonist efficacy by reducing G-protein coupling efficiency. Phosphorylated on tyrosine residues; the phosphorylation is involved in agonist-induced G-protein-independent receptor down-regulation. Phosphorylation at Ser-375 is involved in G-protein-dependent but not beta-arrestin-dependent activation of the ERK pathway. Post-translationally, ubiquitinated. A basal ubiquitination seems not to be related to degradation. Ubiquitination is increased upon formation of OPRM1:OPRD1 oligomers leading to proteasomal degradation; the ubiquitination is diminished by RTP4. In terms of tissue distribution, brain. Is expressed in the cerebral cortex, caudate putamen, nucleus accumbens, septal nuclei, thalamus, hippocampus, and habenula. Not detected in cerebellum.

Its subcellular location is the cell membrane. It is found in the cell projection. The protein resides in the axon. The protein localises to the perikaryon. It localises to the dendrite. Its subcellular location is the endosome. In terms of biological role, receptor for endogenous opioids such as beta-endorphin and endomorphin. Receptor for natural and synthetic opioids including morphine, heroin, DAMGO, fentanyl, etorphine, buprenorphin and methadone. Also activated by enkephalin peptides, such as Met-enkephalin or Met-enkephalin-Arg-Phe, with higher affinity for Met-enkephalin-Arg-Phe. Agonist binding to the receptor induces coupling to an inactive GDP-bound heterotrimeric G-protein complex and subsequent exchange of GDP for GTP in the G-protein alpha subunit leading to dissociation of the G-protein complex with the free GTP-bound G-protein alpha and the G-protein beta-gamma dimer activating downstream cellular effectors. The agonist- and cell type-specific activity is predominantly coupled to pertussis toxin-sensitive G(i) and G(o) G alpha proteins, GNAI1, GNAI2, GNAI3 and GNAO1 isoforms Alpha-1 and Alpha-2, and to a lesser extent to pertussis toxin-insensitive G alpha proteins GNAZ and GNA15. They mediate an array of downstream cellular responses, including inhibition of adenylate cyclase activity and both N-type and L-type calcium channels, activation of inward rectifying potassium channels, mitogen-activated protein kinase (MAPK), phospholipase C (PLC), phosphoinositide/protein kinase (PKC), phosphoinositide 3-kinase (PI3K) and regulation of NF-kappa-B. Also couples to adenylate cyclase stimulatory G alpha proteins. The selective temporal coupling to G-proteins and subsequent signaling can be regulated by RGSZ proteins, such as RGS9, RGS17 and RGS4. Phosphorylation by members of the GPRK subfamily of Ser/Thr protein kinases and association with beta-arrestins is involved in short-term receptor desensitization. Beta-arrestins associate with the GPRK-phosphorylated receptor and uncouple it from the G-protein thus terminating signal transduction. The phosphorylated receptor is internalized through endocytosis via clathrin-coated pits which involves beta-arrestins. The activation of the ERK pathway occurs either in a G-protein-dependent or a beta-arrestin-dependent manner and is regulated by agonist-specific receptor phosphorylation. Acts as a class A G-protein coupled receptor (GPCR) which dissociates from beta-arrestin at or near the plasma membrane and undergoes rapid recycling. Receptor down-regulation pathways are varying with the agonist and occur dependent or independent of G-protein coupling. Endogenous ligands induce rapid desensitization, endocytosis and recycling. Heterooligomerization with other GPCRs can modulate agonist binding, signaling and trafficking properties. This is Mu-type opioid receptor (Oprm1) from Rattus norvegicus (Rat).